We begin with the raw amino-acid sequence, 198 residues long: dTTP/UTP pyrophosphatase (198 aa).

The active-site Proton acceptor is Asp-75.

The protein belongs to the Maf family. YhdE subfamily. The cofactor is a divalent metal cation.

The protein localises to the cytoplasm. The enzyme catalyses dTTP + H2O = dTMP + diphosphate + H(+). It catalyses the reaction UTP + H2O = UMP + diphosphate + H(+). Its function is as follows. Nucleoside triphosphate pyrophosphatase that hydrolyzes dTTP and UTP. May have a dual role in cell division arrest and in preventing the incorporation of modified nucleotides into cellular nucleic acids. This chain is dTTP/UTP pyrophosphatase, found in Wolbachia pipientis wMel.